The chain runs to 92 residues: Small ribosomal subunit protein uS19 (92 aa).

The protein belongs to the universal ribosomal protein uS19 family.

Functionally, protein S19 forms a complex with S13 that binds strongly to the 16S ribosomal RNA. In Neisseria meningitidis serogroup C (strain 053442), this protein is Small ribosomal subunit protein uS19.